We begin with the raw amino-acid sequence, 257 residues long: NAD-dependent protein deacylase (257 aa).

The Deacetylase sirtuin-type domain occupies 1-252 (MLGHAAKLLA…LRRVKDIMAE (252 aa)). 20–39 (GAGISAESGIPTFRGRNGLW) provides a ligand contact to NAD(+). Residues tyrosine 64 and arginine 67 each contribute to the substrate site. Residue 98 to 101 (QNVD) participates in NAD(+) binding. The active-site Proton acceptor is the histidine 116. Residues cysteine 124, cysteine 127, cysteine 151, and cysteine 154 each coordinate Zn(2+). NAD(+) contacts are provided by residues 191-193 (GTS), 217-219 (NVE), and alanine 235.

Belongs to the sirtuin family. Class III subfamily. Requires Zn(2+) as cofactor.

Its subcellular location is the cytoplasm. It carries out the reaction N(6)-acetyl-L-lysyl-[protein] + NAD(+) + H2O = 2''-O-acetyl-ADP-D-ribose + nicotinamide + L-lysyl-[protein]. It catalyses the reaction N(6)-succinyl-L-lysyl-[protein] + NAD(+) + H2O = 2''-O-succinyl-ADP-D-ribose + nicotinamide + L-lysyl-[protein]. Functionally, NAD-dependent lysine deacetylase and desuccinylase that specifically removes acetyl and succinyl groups on target proteins. Modulates the activities of several proteins which are inactive in their acylated form. Deacetylates the N-terminal lysine residue of Alba, the major archaeal chromatin protein and that, in turn, increases Alba's DNA binding affinity, thereby repressing transcription. The polypeptide is NAD-dependent protein deacylase (Thermococcus kodakarensis (strain ATCC BAA-918 / JCM 12380 / KOD1) (Pyrococcus kodakaraensis (strain KOD1))).